Reading from the N-terminus, the 145-residue chain is Protein SprT-like (145 aa).

Positions 4-140 (TNYVQEVSLA…VCGNCHGKLM (137 aa)) constitute a SprT-like domain. Histidine 64 lines the Zn(2+) pocket. Residue glutamate 65 is part of the active site. Position 68 (histidine 68) interacts with Zn(2+).

It belongs to the SprT family. The cofactor is Zn(2+).

The protein localises to the cytoplasm. The chain is Protein SprT-like from Streptococcus pyogenes serotype M3 (strain SSI-1).